The following is a 625-amino-acid chain: DELLA protein SLR1 (625 aa).

The disordered stretch occupies residues 1 to 34 (MKREYQEAGGSSGGGSSADMGSCKDKVMAGAAGE). A DELLA motif motif is present at residues 39–43 (DELLA). Residues 167–208 (TADPSAADSARDTKRMRTGGGSTSSSSSSSSSLGGGASRGSV) are disordered. Residues 189–198 (TSSSSSSSSS) are compositionally biased toward low complexity. A GRAS domain is found at 232–621 (VDTQEAGIRL…RPLIATSAWR (390 aa)). Residues 239–294 (IRLVHALLACAEAVQQENFAAAEALVKQIPTLAASQGGAMRKVAAYFGEALARRVY) are leucine repeat I (LRI). Residues 241–278 (LVHALLACAEAVQQENFAAAEALVKQIPTLAASQGGAM) form a required for possible homodimerization region. The LxCxE motif motif lies at 246-250 (LACAE). The segment at 313 to 378 (HAHFYESCPY…GGPPSFRLTG (66 aa)) is VHIID. Positions 344–348 (VHVVD) match the VHIID motif. Positions 392–431 (QVGWKLAQFAHTIRVDFQYRGLVAATLADLEPFMLQPEGE) are leucine repeat II (LRII). The PFYRE stretch occupies residues 441-542 (IAVNSVFELH…EVYLGRQICN (102 aa)). Positions 449-453 (LHRLL) match the LXXLL motif motif. Residues 545–621 (ACEGAERTER…RPLIATSAWR (77 aa)) form an SAW region.

It belongs to the GRAS family. DELLA subfamily.

In terms of biological role, probable transcriptional regulator that acts as a repressor of the gibberellin (GA) signaling pathway. Probably acts by participating in large multiprotein complexes that repress transcription of GA-inducible genes. Upon GA application, it is degraded by the proteasome, allowing the GA signaling pathway. In contrast, its overexpression prevents the GA signaling pathway and induces a dwarf phenotype. This chain is DELLA protein SLR1, found in Oryza sativa subsp. indica (Rice).